A 183-amino-acid chain; its full sequence is Phosphopantetheine adenylyltransferase (183 aa).

Thr13 lines the substrate pocket. Residues 13–14 and His21 each bind ATP; that span reads TF. The substrate site is built by Lys45, Leu81, and Arg95. ATP contacts are provided by residues 96 to 98, Glu106, and 131 to 137; these read GLR and HQFISSR.

This sequence belongs to the bacterial CoaD family. Homohexamer. The cofactor is Mg(2+).

The protein localises to the cytoplasm. It carries out the reaction (R)-4'-phosphopantetheine + ATP + H(+) = 3'-dephospho-CoA + diphosphate. The protein operates within cofactor biosynthesis; coenzyme A biosynthesis; CoA from (R)-pantothenate: step 4/5. In terms of biological role, reversibly transfers an adenylyl group from ATP to 4'-phosphopantetheine, yielding dephospho-CoA (dPCoA) and pyrophosphate. This Rhodospirillum centenum (strain ATCC 51521 / SW) protein is Phosphopantetheine adenylyltransferase.